A 136-amino-acid chain; its full sequence is ATP synthase epsilon chain, plastid (136 aa).

This sequence belongs to the ATPase epsilon chain family. F-type ATPases have 2 components, CF(1) - the catalytic core - and CF(0) - the membrane proton channel. CF(1) has five subunits: alpha(3), beta(3), gamma(1), delta(1), epsilon(1). CF(0) has three main subunits: a, b and c.

It is found in the plastid thylakoid membrane. Functionally, produces ATP from ADP in the presence of a proton gradient across the membrane. The sequence is that of ATP synthase epsilon chain, plastid from Cuscuta reflexa (Southern Asian dodder).